The primary structure comprises 332 residues: MGSSGSMVKPISGFLTALIQYPVPVVESRADIDQQIKQIIKTIHSTKAGYPGLELIVFPEYSTQGLNTKKWTTEEFLCTVPGPETDLFAEACKESEVYGVFSIMERNPDGGEPYNTAIIIDPQGEMILKYRKLNPWVPVEPWKAGDLGLPVCDGPGGSKLAVCICHDGMFPEVAREAAYKGANVLIRISGYSTQVSEQWMLTNRSNAWQNLMYTLSVNLAGYDGVFYYFGEGQVCNFDGTTLVQGHRNPWEIVTAEVYPELADQARLGWGLENNIYNLGSRGYVATPGGVKENPYTFVKDLAEGKYKVPWEDEIKVKDGTIYGYPVKKTIHS.

The 246-residue stretch at 14–259 (FLTALIQYPV…WEIVTAEVYP (246 aa)) folds into the CN hydrolase domain. Glu-60 acts as the Proton acceptor in catalysis. Lys-132 (proton donor) is an active-site residue. Cys-165 acts as the Nucleophile in catalysis.

Belongs to the carbon-nitrogen hydrolase superfamily. Aliphatic amidase family.

The catalysed reaction is formamide + H2O = formate + NH4(+). Functionally, is an aliphatic amidase with a restricted substrate specificity, as it only hydrolyzes formamide. This chain is Formamidase, found in Bacillus thuringiensis (strain Al Hakam).